We begin with the raw amino-acid sequence, 198 residues long: Prostamide/prostaglandin F synthase (198 aa).

Position 108 is a phosphotyrosine (tyrosine 108).

This sequence belongs to the peroxiredoxin-like PRXL2 family. Prostamide/prostaglandin F synthase subfamily.

It is found in the cytoplasm. Its subcellular location is the cytosol. The enzyme catalyses prostaglandin H2 + [thioredoxin]-dithiol = prostaglandin F2alpha + [thioredoxin]-disulfide. It catalyses the reaction prostamide F2alpha + [thioredoxin]-disulfide = prostamide H2 + [thioredoxin]-dithiol. In terms of biological role, catalyzes the reduction of prostaglandin-ethanolamide H(2) (prostamide H(2)) to prostamide F(2alpha) with NADPH as proton donor. Also able to reduce prostaglandin H(2) to prostaglandin F(2alpha). The polypeptide is Prostamide/prostaglandin F synthase (Homo sapiens (Human)).